A 182-amino-acid polypeptide reads, in one-letter code: Large ribosomal subunit protein uL5 (182 aa).

The protein belongs to the universal ribosomal protein uL5 family. As to quaternary structure, part of the 50S ribosomal subunit; part of the 5S rRNA/L5/L18/L25 subcomplex. Contacts the 5S rRNA and the P site tRNA. Forms a bridge to the 30S subunit in the 70S ribosome.

Functionally, this is one of the proteins that bind and probably mediate the attachment of the 5S RNA into the large ribosomal subunit, where it forms part of the central protuberance. In the 70S ribosome it contacts protein S13 of the 30S subunit (bridge B1b), connecting the 2 subunits; this bridge is implicated in subunit movement. Contacts the P site tRNA; the 5S rRNA and some of its associated proteins might help stabilize positioning of ribosome-bound tRNAs. In Trichormus variabilis (strain ATCC 29413 / PCC 7937) (Anabaena variabilis), this protein is Large ribosomal subunit protein uL5.